Here is a 211-residue protein sequence, read N- to C-terminus: Large ribosomal subunit protein eL13 (211 aa).

N6-acetyllysine is present on Lys-16. Residues Ser-52, Ser-77, and Ser-106 each carry the phosphoserine modification. Residues Lys-123 and Lys-145 each participate in a glycyl lysine isopeptide (Lys-Gly) (interchain with G-Cter in SUMO2) cross-link. Lys-174 is covalently cross-linked (Glycyl lysine isopeptide (Lys-Gly) (interchain with G-Cter in SUMO1); alternate). Glycyl lysine isopeptide (Lys-Gly) (interchain with G-Cter in SUMO2); alternate cross-links involve residues Lys-174 and Lys-177. The residue at position 177 (Lys-177) is an N6-acetyllysine; alternate.

This sequence belongs to the eukaryotic ribosomal protein eL13 family. As to quaternary structure, component of the 60S large ribosomal subunit (LSU). In terms of tissue distribution, higher levels of expression in benign breast lesions than in carcinomas.

It localises to the cytoplasm. Component of the ribosome, a large ribonucleoprotein complex responsible for the synthesis of proteins in the cell. The small ribosomal subunit (SSU) binds messenger RNAs (mRNAs) and translates the encoded message by selecting cognate aminoacyl-transfer RNA (tRNA) molecules. The large subunit (LSU) contains the ribosomal catalytic site termed the peptidyl transferase center (PTC), which catalyzes the formation of peptide bonds, thereby polymerizing the amino acids delivered by tRNAs into a polypeptide chain. The nascent polypeptides leave the ribosome through a tunnel in the LSU and interact with protein factors that function in enzymatic processing, targeting, and the membrane insertion of nascent chains at the exit of the ribosomal tunnel. As part of the LSU, it is probably required for its formation and the maturation of rRNAs. Plays a role in bone development. This is Large ribosomal subunit protein eL13 (RPL13) from Homo sapiens (Human).